A 325-amino-acid chain; its full sequence is HTH-type transcriptional regulator VqsM (325 aa).

One can recognise an HTH araC/xylS-type domain in the interval 226-323 (QRIELFLDSI…GQSTTEFRNS (98 aa)). 2 consecutive DNA-binding regions (H-T-H motif) follow at residues 243-264 (VTTA…ADEG) and 290-313 (VDRI…RRWT).

In terms of biological role, transcriptional regulator involved in both the repression (at least 99 genes, such as mexR and algU) and in the activation (at least 203 genes, such as mvfR, rsaL, vqsR and rpoS) of regulatory or putative regulatory proteins which are implicated in quorum sensing, virulence and multidrug resistance. In Pseudomonas aeruginosa (strain ATCC 15692 / DSM 22644 / CIP 104116 / JCM 14847 / LMG 12228 / 1C / PRS 101 / PAO1), this protein is HTH-type transcriptional regulator VqsM (vqsM).